A 92-amino-acid chain; its full sequence is Small ribosomal subunit protein uS19 (92 aa).

It belongs to the universal ribosomal protein uS19 family.

Protein S19 forms a complex with S13 that binds strongly to the 16S ribosomal RNA. In Methylobacterium nodulans (strain LMG 21967 / CNCM I-2342 / ORS 2060), this protein is Small ribosomal subunit protein uS19.